A 451-amino-acid chain; its full sequence is Signal recognition particle 54 kDa protein (451 aa).

GTP-binding positions include 105-112 (GVQGTGKT), 187-191 (DTAGR), and 247-250 (TKMD).

The protein belongs to the GTP-binding SRP family. SRP54 subfamily. In terms of assembly, part of the signal recognition particle protein translocation system, which is composed of SRP and FtsY. Archaeal SRP consists of a 7S RNA molecule of 300 nucleotides and two protein subunits: SRP54 and SRP19.

The protein resides in the cytoplasm. The enzyme catalyses GTP + H2O = GDP + phosphate + H(+). Functionally, involved in targeting and insertion of nascent membrane proteins into the cytoplasmic membrane. Binds to the hydrophobic signal sequence of the ribosome-nascent chain (RNC) as it emerges from the ribosomes. The SRP-RNC complex is then targeted to the cytoplasmic membrane where it interacts with the SRP receptor FtsY. This chain is Signal recognition particle 54 kDa protein, found in Acidianus ambivalens (Desulfurolobus ambivalens).